We begin with the raw amino-acid sequence, 443 residues long: ATP-dependent protease ATPase subunit HslU (443 aa).

Residues isoleucine 18 and 60-65 each bind ATP; that span reads GVGKTE. Positions 139–161 are disordered; the sequence is ARDSGFDANPSEENNATRQKFRK. Residues aspartate 256, glutamate 321, and arginine 393 each coordinate ATP.

This sequence belongs to the ClpX chaperone family. HslU subfamily. A double ring-shaped homohexamer of HslV is capped on each side by a ring-shaped HslU homohexamer. The assembly of the HslU/HslV complex is dependent on binding of ATP.

It is found in the cytoplasm. Functionally, ATPase subunit of a proteasome-like degradation complex; this subunit has chaperone activity. The binding of ATP and its subsequent hydrolysis by HslU are essential for unfolding of protein substrates subsequently hydrolyzed by HslV. HslU recognizes the N-terminal part of its protein substrates and unfolds these before they are guided to HslV for hydrolysis. The protein is ATP-dependent protease ATPase subunit HslU of Nitrosomonas eutropha (strain DSM 101675 / C91 / Nm57).